A 178-amino-acid chain; its full sequence is Conodipine-P1 (178 aa).

The first 24 residues, 1–24, serve as a signal peptide directing secretion; it reads MKLLAPVLWAMAALGVTWLVAVDS. Proline 38, proline 42, and proline 49 each carry 4-hydroxyproline; partial. Residue histidine 54 is part of the active site. The propeptide at 98 to 130 is interchain peptide; the sequence is KREVTSHRATSIAHSRLWKTALDQKSFLNRKAR. Glutamine 131 is subject to Pyrrolidone carboxylic acid. The residue at position 137 (proline 137) is a 4-hydroxyproline; partial.

It belongs to the phospholipase A2 family. Group IX subfamily. In terms of assembly, heterodimer of an alpha and a beta chain; probably disulfide-linked. The cofactor is Ca(2+). In terms of tissue distribution, expressed by the venom duct.

The protein localises to the secreted. The catalysed reaction is a 1,2-diacyl-sn-glycero-3-phosphocholine + H2O = a 1-acyl-sn-glycero-3-phosphocholine + a fatty acid + H(+). In terms of biological role, catalyzes the calcium-dependent hydrolysis of the 2-acyl groups in 3-sn-phosphoglycerides. The chain is Conodipine-P1 from Conus purpurascens (Purple cone).